Here is a 347-residue protein sequence, read N- to C-terminus: Selenide, water dikinase (347 aa).

The active site involves Cys17. Residues Lys20 and 48–50 (TRD) contribute to the ATP site. Position 51 (Asp51) interacts with Mg(2+). ATP contacts are provided by residues Asp68, Asp91, and 139 to 141 (GHS). A Mg(2+)-binding site is contributed by Asp91. Asp227 is a Mg(2+) binding site.

Belongs to the selenophosphate synthase 1 family. Class I subfamily. As to quaternary structure, homodimer. Mg(2+) is required as a cofactor.

The enzyme catalyses hydrogenselenide + ATP + H2O = selenophosphate + AMP + phosphate + 2 H(+). Functionally, synthesizes selenophosphate from selenide and ATP. The protein is Selenide, water dikinase of Escherichia coli O157:H7.